A 72-amino-acid polypeptide reads, in one-letter code: uncharacterized protein (72 aa).

A helical transmembrane segment spans residues 23-45 (ITNLLITTILLCFFNATTYWKLF).

Its subcellular location is the membrane. This is an uncharacterized protein from Schizosaccharomyces pombe (strain 972 / ATCC 24843) (Fission yeast).